The primary structure comprises 139 residues: Small ribosomal subunit protein uS11 (139 aa).

Residues 117–139 (VEDVTPIPHDGTRPKGGRRGRRV) form a disordered region.

Belongs to the universal ribosomal protein uS11 family. As to quaternary structure, part of the 30S ribosomal subunit.

In terms of biological role, located on the platform of the 30S subunit. In Thermococcus onnurineus (strain NA1), this protein is Small ribosomal subunit protein uS11.